Consider the following 218-residue polypeptide: Telomere repeats-binding bouquet formation protein 2 (218 aa).

Residues 117–143 (HDRMASSDKENIRPTPEHKQELSKSAE) form a disordered region.

The protein belongs to the TERB2 family. As to quaternary structure, component of the MAJIN-TERB1-TERB2 complex, composed of MAJIN, TERB1 and TERB2. As to expression, specifically expressed in germline tissues.

The protein resides in the chromosome. It localises to the telomere. Its subcellular location is the nucleus inner membrane. Its function is as follows. Meiosis-specific telomere-associated protein involved in meiotic telomere attachment to the nucleus inner membrane, a crucial step for homologous pairing and synapsis. Component of the MAJIN-TERB1-TERB2 complex, which promotes telomere cap exchange by mediating attachment of telomeric DNA to the inner nuclear membrane and replacement of the protective cap of telomeric chromosomes: in early meiosis, the MAJIN-TERB1-TERB2 complex associates with telomeric DNA and the shelterin/telosome complex. During prophase, the complex matures and promotes release of the shelterin/telosome complex from telomeric DNA. The polypeptide is Telomere repeats-binding bouquet formation protein 2 (Mus musculus (Mouse)).